The primary structure comprises 139 residues: Acyl carrier protein 4, chloroplastic (139 aa).

A chloroplast-targeting transit peptide spans 1-55 (MASAAAGASICIKSASCSPLAPGRISSLRSVSLPVSRKSFPSLRSSKGSFARVSC). Residues 59–134 (PETVAKVCRI…DAADLIEKLM (76 aa)) form the Carrier domain. O-(pantetheine 4'-phosphoryl)serine is present on Ser94.

This sequence belongs to the acyl carrier protein (ACP) family. 4'-phosphopantetheine is transferred from CoA to a specific serine of apo-ACP by acpS. This modification is essential for activity because fatty acids are bound in thioester linkage to the sulfhydryl of the prosthetic group.

The protein resides in the plastid. It is found in the chloroplast. Its pathway is lipid metabolism; fatty acid biosynthesis. Its function is as follows. Carrier of the growing fatty acid chain in fatty acid biosynthesis. In Cuphea lanceolata (Cigar flower), this protein is Acyl carrier protein 4, chloroplastic (ACL1).